The chain runs to 1454 residues: Coiled-coil domain-containing protein 18 (1454 aa).

At Ser45 the chain carries Phosphoserine. 4 coiled-coil regions span residues Ala107–Met138, Ile170–Leu402, Lys438–Ala464, and Thr508–Glu1309. Residues Gln828–Glu851 are disordered. Ser1355 carries the post-translational modification Phosphoserine.

The protein localises to the cytoplasm. Its subcellular location is the cytoskeleton. It is found in the microtubule organizing center. The protein resides in the centrosome. It localises to the centriolar satellite. The protein is Coiled-coil domain-containing protein 18 (CCDC18) of Homo sapiens (Human).